Reading from the N-terminus, the 295-residue chain is Small ribosomal subunit protein uS3 (295 aa).

The region spanning Val-39–Arg-107 is the KH type-2 domain. Residues Gly-213–Glu-295 form a disordered region. The span at Glu-224–Ala-245 shows a compositional bias: basic and acidic residues. Composition is skewed to low complexity over residues Pro-246 to Gly-255 and Ala-283 to Glu-295.

This sequence belongs to the universal ribosomal protein uS3 family. As to quaternary structure, part of the 30S ribosomal subunit. Forms a tight complex with proteins S10 and S14.

Its function is as follows. Binds the lower part of the 30S subunit head. Binds mRNA in the 70S ribosome, positioning it for translation. This is Small ribosomal subunit protein uS3 from Polaromonas naphthalenivorans (strain CJ2).